We begin with the raw amino-acid sequence, 710 residues long: Putative transmembrane protein ORF710 (710 aa).

The N-terminal stretch at 1–33 (MKLDRKKKRLLLKTIFSIVILILPLTFLHPTNS) is a signal peptide. The next 3 helical transmembrane spans lie at 41–61 (VPIQ…TAPL), 76–95 (YGTL…VVWY), and 689–709 (VAIV…IFAI).

The protein resides in the host membrane. This chain is Putative transmembrane protein ORF710, found in Acidianus convivator (ATV).